Reading from the N-terminus, the 154-residue chain is Myoglobin (154 aa).

Positions 2-148 constitute a Globin domain; it reads VLSDAEWQLV…FRKDIAAKYK (147 aa). A Phosphoserine modification is found at S4. H65 contacts nitrite. H65 is a binding site for O2. T68 bears the Phosphothreonine mark. H94 serves as a coordination point for heme b.

The protein belongs to the globin family. As to quaternary structure, monomeric.

The protein resides in the cytoplasm. It is found in the sarcoplasm. It catalyses the reaction Fe(III)-heme b-[protein] + nitric oxide + H2O = Fe(II)-heme b-[protein] + nitrite + 2 H(+). The enzyme catalyses H2O2 + AH2 = A + 2 H2O. Functionally, monomeric heme protein which primary function is to store oxygen and facilitate its diffusion within muscle tissues. Reversibly binds oxygen through a pentacoordinated heme iron and enables its timely and efficient release as needed during periods of heightened demand. Depending on the oxidative conditions of tissues and cells, and in addition to its ability to bind oxygen, it also has a nitrite reductase activity whereby it regulates the production of bioactive nitric oxide. Under stress conditions, like hypoxia and anoxia, it also protects cells against reactive oxygen species thanks to its pseudoperoxidase activity. This is Myoglobin (MB) from Eschrichtius robustus (California gray whale).